We begin with the raw amino-acid sequence, 198 residues long: HTH-type transcriptional regulator BetI (198 aa).

The HTH tetR-type domain occupies 8-68 (KIRRPQLVSA…ETMRDILRQL (61 aa)). A DNA-binding region (H-T-H motif) is located at residues 31 to 50 (SVSLISQEAGVSSGIINHYF).

It functions in the pathway amine and polyamine biosynthesis; betaine biosynthesis via choline pathway [regulation]. Repressor involved in the biosynthesis of the osmoprotectant glycine betaine. It represses transcription of the choline transporter BetT and the genes of BetAB involved in the synthesis of glycine betaine. In Vibrio vulnificus (strain YJ016), this protein is HTH-type transcriptional regulator BetI.